Reading from the N-terminus, the 85-residue chain is Large ribosomal subunit protein bL27 (85 aa).

The tract at residues 1–22 is disordered; that stretch reads MAHKKAGGSSRNGRDSHSKRLG.

The protein belongs to the bacterial ribosomal protein bL27 family.

This chain is Large ribosomal subunit protein bL27, found in Nitrosomonas europaea (strain ATCC 19718 / CIP 103999 / KCTC 2705 / NBRC 14298).